A 232-amino-acid polypeptide reads, in one-letter code: Small ribosomal subunit protein uS3 (232 aa).

Residues 39–107 (VRQFLTKELA…PAQINIAEVR (69 aa)) enclose the KH type-2 domain.

It belongs to the universal ribosomal protein uS3 family. In terms of assembly, part of the 30S ribosomal subunit. Forms a tight complex with proteins S10 and S14.

Functionally, binds the lower part of the 30S subunit head. Binds mRNA in the 70S ribosome, positioning it for translation. The protein is Small ribosomal subunit protein uS3 of Yersinia pestis bv. Antiqua (strain Antiqua).